The primary structure comprises 342 residues: Holliday junction branch migration complex subunit RuvB (342 aa).

The interval 1-185 is large ATPase domain (RuvB-L); the sequence is MREDYLKSDD…FGINARLEYY (185 aa). Residues Leu24, Arg25, Gly66, Lys69, Thr70, Thr71, 132–134, Arg175, Tyr185, and Arg222 each bind ATP; that span reads EDY. Thr70 lines the Mg(2+) pocket. The interval 186 to 256 is small ATPAse domain (RuvB-S); that stretch reads DAKLLTRIVQ…IARIALQALN (71 aa). Residues 259–342 form a head domain (RuvB-H) region; sequence HNGLDDMDNR…PPAQSGTLFE (84 aa). Residues Arg314 and Arg319 each coordinate DNA.

Belongs to the RuvB family. As to quaternary structure, homohexamer. Forms an RuvA(8)-RuvB(12)-Holliday junction (HJ) complex. HJ DNA is sandwiched between 2 RuvA tetramers; dsDNA enters through RuvA and exits via RuvB. An RuvB hexamer assembles on each DNA strand where it exits the tetramer. Each RuvB hexamer is contacted by two RuvA subunits (via domain III) on 2 adjacent RuvB subunits; this complex drives branch migration. In the full resolvosome a probable DNA-RuvA(4)-RuvB(12)-RuvC(2) complex forms which resolves the HJ.

Its subcellular location is the cytoplasm. It catalyses the reaction ATP + H2O = ADP + phosphate + H(+). The RuvA-RuvB-RuvC complex processes Holliday junction (HJ) DNA during genetic recombination and DNA repair, while the RuvA-RuvB complex plays an important role in the rescue of blocked DNA replication forks via replication fork reversal (RFR). RuvA specifically binds to HJ cruciform DNA, conferring on it an open structure. The RuvB hexamer acts as an ATP-dependent pump, pulling dsDNA into and through the RuvAB complex. RuvB forms 2 homohexamers on either side of HJ DNA bound by 1 or 2 RuvA tetramers; 4 subunits per hexamer contact DNA at a time. Coordinated motions by a converter formed by DNA-disengaged RuvB subunits stimulates ATP hydrolysis and nucleotide exchange. Immobilization of the converter enables RuvB to convert the ATP-contained energy into a lever motion, pulling 2 nucleotides of DNA out of the RuvA tetramer per ATP hydrolyzed, thus driving DNA branch migration. The RuvB motors rotate together with the DNA substrate, which together with the progressing nucleotide cycle form the mechanistic basis for DNA recombination by continuous HJ branch migration. Branch migration allows RuvC to scan DNA until it finds its consensus sequence, where it cleaves and resolves cruciform DNA. The chain is Holliday junction branch migration complex subunit RuvB from Cytophaga hutchinsonii (strain ATCC 33406 / DSM 1761 / CIP 103989 / NBRC 15051 / NCIMB 9469 / D465).